The primary structure comprises 188 residues: Elongation factor P (188 aa).

The protein belongs to the elongation factor P family.

It is found in the cytoplasm. It participates in protein biosynthesis; polypeptide chain elongation. In terms of biological role, involved in peptide bond synthesis. Stimulates efficient translation and peptide-bond synthesis on native or reconstituted 70S ribosomes in vitro. Probably functions indirectly by altering the affinity of the ribosome for aminoacyl-tRNA, thus increasing their reactivity as acceptors for peptidyl transferase. The sequence is that of Elongation factor P from Aeromonas hydrophila subsp. hydrophila (strain ATCC 7966 / DSM 30187 / BCRC 13018 / CCUG 14551 / JCM 1027 / KCTC 2358 / NCIMB 9240 / NCTC 8049).